The primary structure comprises 354 residues: Phospho-N-acetylmuramoyl-pentapeptide-transferase (354 aa).

Transmembrane regions (helical) follow at residues 23–43 (FSFF…IAWA), 66–86 (TPTM…LLCA), 88–108 (LDNV…ALGF), 130–150 (LAVQ…HGEL), 161–181 (FALL…IVAA), 193–213 (GLAS…AYIC), 230–250 (VGET…FLWF), 257–277 (VFMG…MGVM), 282–302 (ILLI…ILQV), and 331–351 (KIIV…LTAL).

Belongs to the glycosyltransferase 4 family. MraY subfamily. It depends on Mg(2+) as a cofactor.

Its subcellular location is the cell inner membrane. It catalyses the reaction UDP-N-acetyl-alpha-D-muramoyl-L-alanyl-gamma-D-glutamyl-meso-2,6-diaminopimeloyl-D-alanyl-D-alanine + di-trans,octa-cis-undecaprenyl phosphate = di-trans,octa-cis-undecaprenyl diphospho-N-acetyl-alpha-D-muramoyl-L-alanyl-D-glutamyl-meso-2,6-diaminopimeloyl-D-alanyl-D-alanine + UMP. The protein operates within cell wall biogenesis; peptidoglycan biosynthesis. Its function is as follows. Catalyzes the initial step of the lipid cycle reactions in the biosynthesis of the cell wall peptidoglycan: transfers peptidoglycan precursor phospho-MurNAc-pentapeptide from UDP-MurNAc-pentapeptide onto the lipid carrier undecaprenyl phosphate, yielding undecaprenyl-pyrophosphoryl-MurNAc-pentapeptide, known as lipid I. The polypeptide is Phospho-N-acetylmuramoyl-pentapeptide-transferase (Campylobacter curvus (strain 525.92)).